A 344-amino-acid polypeptide reads, in one-letter code: Small neutral protease regulatory protein (344 aa).

The HTH lysR-type domain occupies 1-60; it reads MELEVRHLRALCAIADAGSLHRAARRLGVAQPTLSTQLTRIEQALGGPLFTRERTGCRPT. Positions 20-39 form a DNA-binding region, H-T-H motif; it reads LHRAARRLGVAQPTLSTQLT. Positions 322–344 are disordered; it reads SCGRAEGSRSRRPRDVAPPRPIG. The span at 327-338 shows a compositional bias: basic and acidic residues; it reads EGSRSRRPRDVA.

This sequence belongs to the LysR transcriptional regulatory family.

Its function is as follows. Transcriptional activator of the gene (snpA) for the small neutral protease. In Streptomyces lividans, this protein is Small neutral protease regulatory protein (mprR).